We begin with the raw amino-acid sequence, 66 residues long: Hirudin-PA (66 aa).

Positions 1 to 3 (ITY) are interaction with thrombin active site. Intrachain disulfides connect Cys6/Cys14, Cys16/Cys28, and Cys22/Cys39. The segment at 39–66 (CVTGEGTPKPQSHNQGDFEPIPEDAYDE) is disordered. Thr45 is a glycosylation site (O-linked (GalNAc...) threonine). An interaction with fibrinogen-binding exosite of thrombin region spans residues 55–66 (DFEPIPEDAYDE). Tyr64 carries the post-translational modification Sulfotyrosine.

This sequence belongs to the protease inhibitor I14 (hirudin) family.

The protein localises to the secreted. Functionally, hirudin is a potent thrombin-specific protease inhibitor. It forms a stable non-covalent complex with alpha-thrombin, thereby abolishing its ability to cleave fibrinogen. This Hirudo medicinalis (Medicinal leech) protein is Hirudin-PA.